The primary structure comprises 286 residues: NAD kinase (286 aa).

Residue aspartate 74 is the Proton acceptor of the active site. NAD(+) is bound by residues 74–75 (DG), 148–149 (ND), aspartate 178, alanine 186, 189–194 (TAYNLS), and glutamine 244.

This sequence belongs to the NAD kinase family. The cofactor is a divalent metal cation.

It localises to the cytoplasm. The catalysed reaction is NAD(+) + ATP = ADP + NADP(+) + H(+). Its function is as follows. Involved in the regulation of the intracellular balance of NAD and NADP, and is a key enzyme in the biosynthesis of NADP. Catalyzes specifically the phosphorylation on 2'-hydroxyl of the adenosine moiety of NAD to yield NADP. This chain is NAD kinase, found in Campylobacter jejuni subsp. jejuni serotype O:2 (strain ATCC 700819 / NCTC 11168).